The sequence spans 180 residues: Large ribosomal subunit protein uL6 (180 aa).

It belongs to the universal ribosomal protein uL6 family. As to quaternary structure, part of the 50S ribosomal subunit.

Its function is as follows. This protein binds to the 23S rRNA, and is important in its secondary structure. It is located near the subunit interface in the base of the L7/L12 stalk, and near the tRNA binding site of the peptidyltransferase center. The chain is Large ribosomal subunit protein uL6 from Clostridium botulinum (strain Okra / Type B1).